The primary structure comprises 292 residues: ER membrane protein complex subunit 2 (292 aa).

The stretch at 163–196 is one TPR repeat; it reads AELWWYASEIYFEMGQFEKACYCLEQVLCITPFN.

It belongs to the EMC2 family. In terms of assembly, component of the ER membrane protein complex (EMC), which is composed of EMC1, EMC2, EMC3, EMC4, EMC5 and EMC6.

Its subcellular location is the endoplasmic reticulum membrane. Its function is as follows. Part of the endoplasmic reticulum membrane protein complex (EMC) that enables the energy-independent insertion into endoplasmic reticulum membranes of newly synthesized membrane proteins. Preferentially accommodates proteins with transmembrane domains that are weakly hydrophobic or contain destabilizing features such as charged and aromatic residues. Involved in the cotranslational insertion of multi-pass membrane proteins in which stop-transfer membrane-anchor sequences become ER membrane spanning helices. It is also required for the post-translational insertion of tail-anchored/TA proteins in endoplasmic reticulum membranes. By mediating the proper cotranslational insertion of N-terminal transmembrane domains in an N-exo topology, with translocated N-terminus in the lumen of the ER, controls the topology of multi-pass membrane proteins. The polypeptide is ER membrane protein complex subunit 2 (EMC2) (Saccharomyces cerevisiae (strain ATCC 204508 / S288c) (Baker's yeast)).